The sequence spans 642 residues: Serotransferrin (642 aa).

Transferrin-like domains lie at 1-280 and 290-621; these read GIKE…SLKK and IKWC…SLRQ. 2 residues coordinate Fe(3+): Asp-25 and Tyr-54. 3 cysteine pairs are disulfide-bonded: Cys-77–Cys-158, Cys-121–Cys-137, and Cys-186–Cys-200. Hydrogencarbonate is bound by residues Thr-79, Lys-83, Ala-85, and Gly-86. Residue Tyr-152 participates in Fe(3+) binding. Residue His-208 coordinates Fe(3+). 2 disulfides stabilise this stretch: Cys-293/Cys-329 and Cys-303/Cys-320. Asp-344 is a Fe(3+) binding site. 7 cysteine pairs are disulfide-bonded: Cys-354/Cys-633, Cys-369/Cys-594, Cys-402/Cys-480, Cys-426/Cys-622, Cys-436/Cys-450, Cys-447/Cys-463, and Cys-520/Cys-535. Asn-365 carries an N-linked (GlcNAc...) asparagine glycan. A Fe(3+)-binding site is contributed by Tyr-379. Hydrogencarbonate contacts are provided by Thr-404, Arg-408, Ala-410, and Gly-411. Tyr-474 lines the Fe(3+) pocket. His-543 serves as a coordination point for Fe(3+).

The protein belongs to the transferrin family. As to quaternary structure, monomer. As to expression, brain and liver; to a lesser extent in kidney and heart.

It localises to the secreted. Functionally, transferrins are iron binding transport proteins which can bind two Fe(3+) ions in association with the binding of an anion, usually bicarbonate. This chain is Serotransferrin (tf), found in Gadus morhua (Atlantic cod).